The sequence spans 362 residues: Alpha-glucoside transport ATP-binding protein AglK (362 aa).

The region spanning 4-235 (LLLKDIRKSY…PANLFVARFI (232 aa)) is the ABC transporter domain. Position 36–43 (36–43 (GPSGCGKS)) interacts with ATP.

This sequence belongs to the ABC transporter superfamily.

It is found in the cell inner membrane. In terms of biological role, part of the binding-protein-dependent transport system for alpha-glucosides such as sucrose, maltose and trehalose. Probably responsible for energy coupling to the transport system. This Rhizobium meliloti (strain 1021) (Ensifer meliloti) protein is Alpha-glucoside transport ATP-binding protein AglK (aglK).